Here is a 573-residue protein sequence, read N- to C-terminus: MELPTPQKVQEPPKSFEEFLKSQNWDYWPRDVHIRDGDIWENTLRKLEEAVSYNSVYSYLWTNVPRLYEIVDSMESKLKECSHLLQQHASRLFESDRLISKKRTYTNLDRYKAFLKEHYRRKKIVLSDQMETEKNIEGCTFLLKQNELTQLPRHLDAKQIYLYVLRTHNLEEKVFKVWKTHILSDCSIALLHDCFWWWFLHKFKPDKRDQDWLFDRIAESYVTLFMRIPLRRKDIFFQMYPDWLAQAVYTTFQESFPESCSLFNDNFKEDLGNTIFLWLSGLKPAPGFWTHWKLQDLCTTTIHGCRRVPVKLRRGIMSSQEHTSATVGLKIEDILKNPRALPVLKEESAASKVTTKSHYRSLGPEFYKVLFDFGGQSPLILYYLKMHELGGISVTYNPKGSKFTKILREPPPAPTYCEIIKDAKRKFADNKKDFKRVKQRIKDDIKFLKEQQEQIDKELDRLQAKASKNLQEVKNDFENFLHKLRVEAKLKEEYRGSASPSESLQSLQSPNSSLSSPAMSEDFNSVEEGGLKEARSDHYLRTTHSSFSSINLIGGECTTKSTFCCSSLKSSHQ.

The stretch at 429-485 forms a coiled coil; it reads DNKKDFKRVKQRIKDDIKFLKEQQEQIDKELDRLQAKASKNLQEVKNDFENFLHKLR. Residues 497–521 are compositionally biased toward low complexity; the sequence is SASPSESLQSLQSPNSSLSSPAMSE. The interval 497-528 is disordered; sequence SASPSESLQSLQSPNSSLSSPAMSEDFNSVEE.

This sequence belongs to the FAM227 family.

The polypeptide is Protein FAM227B (Fam227b) (Rattus norvegicus (Rat)).